Reading from the N-terminus, the 487-residue chain is NADH-quinone oxidoreductase subunit N (487 aa).

Helical transmembrane passes span 8-28 (LLAL…MLAI), 37-57 (AFVV…IVMA), 71-91 (GYAV…CTFG), 104-124 (EFYL…GSRH), 125-145 (LASL…LVGY), 159-179 (YMVL…LLYA), 203-223 (LMGG…LAPF), 235-255 (PAPV…CVLL), 269-289 (IHWL…LLAL), 303-323 (ISHF…QMPV), 327-347 (GVYL…ISMM), 374-394 (AVLT…GFIG), 408-427 (WWLS…YYLR), and 449-469 (AITS…ALGL).

This sequence belongs to the complex I subunit 2 family. NDH-1 is composed of 14 different subunits. Subunits NuoA, H, J, K, L, M, N constitute the membrane sector of the complex.

It localises to the cell inner membrane. The catalysed reaction is a quinone + NADH + 5 H(+)(in) = a quinol + NAD(+) + 4 H(+)(out). Its function is as follows. NDH-1 shuttles electrons from NADH, via FMN and iron-sulfur (Fe-S) centers, to quinones in the respiratory chain. The immediate electron acceptor for the enzyme in this species is believed to be ubiquinone. Couples the redox reaction to proton translocation (for every two electrons transferred, four hydrogen ions are translocated across the cytoplasmic membrane), and thus conserves the redox energy in a proton gradient. The polypeptide is NADH-quinone oxidoreductase subunit N (Aeromonas hydrophila subsp. hydrophila (strain ATCC 7966 / DSM 30187 / BCRC 13018 / CCUG 14551 / JCM 1027 / KCTC 2358 / NCIMB 9240 / NCTC 8049)).